Reading from the N-terminus, the 415-residue chain is SNF1 protein kinase subunit beta-2 (415 aa).

Disordered regions lie at residues methionine 1–alanine 43, lysine 55–isoleucine 158, and glutamate 249–alanine 276. A lipid anchor (N-myristoyl glycine) is attached at glycine 2. Residues alanine 9 to arginine 19 show a composition bias toward basic residues. Over residues lysine 55–glycine 69 the composition is skewed to polar residues. Serine 66 bears the Phosphoserine mark. 2 stretches are compositionally biased toward basic and acidic residues: residues proline 122–glutamate 150 and glutamate 249–serine 264. Residues glycine 154–threonine 335 form a kinase-interacting sequence (KIS); required for interaction with SNF1 region. Position 298 is a phosphoserine (serine 298). Positions serine 336–serine 415 are association with SNF1 kinase complex (ASC) domain; required for interaction with SNF4.

Belongs to the 5'-AMP-activated protein kinase beta subunit family. Component of the SNF1 kinase complex, a heterotrimeric complex composed of the catalytic alpha subunit SNF1, one of the three related beta subunits SIP1, SIP2 or GAL83, and the regulatory gamma subunit SNF4. The beta subunit serves as a bridge between the catalytic and the regulatory subunit. Interacts (via KIS domain) with SNF1. Interacts (via ASC domain) with SNF4. In terms of processing, phosphorylated by SNF1 in vitro.

It localises to the cytoplasm. The protein localises to the cell membrane. Beta subunit of the SNF1 kinase complex, which is required for transcriptional, metabolic, and developmental adaptations in response to glucose limitation. Has a structural role, mediating heterotrimer formation, and a regulatory role, defining carbon source-regulated subcellular location and substrate specificity of the SNF1 kinase complex. Involved in the regulation of aging. Acts as a negative regulator of nuclear SNF1 activity in young cells by sequestering its activating gamma subunit at the plasma membrane. The polypeptide is SNF1 protein kinase subunit beta-2 (SIP2) (Saccharomyces cerevisiae (strain ATCC 204508 / S288c) (Baker's yeast)).